The following is a 331-amino-acid chain: DNA-directed RNA polymerase subunit alpha (331 aa).

Positions Met1–Asn226 are alpha N-terminal domain (alpha-NTD). The alpha C-terminal domain (alpha-CTD) stretch occupies residues Thr243–Glu331.

The protein belongs to the RNA polymerase alpha chain family. As to quaternary structure, homodimer. The RNAP catalytic core consists of 2 alpha, 1 beta, 1 beta' and 1 omega subunit. When a sigma factor is associated with the core the holoenzyme is formed, which can initiate transcription.

It carries out the reaction RNA(n) + a ribonucleoside 5'-triphosphate = RNA(n+1) + diphosphate. Functionally, DNA-dependent RNA polymerase catalyzes the transcription of DNA into RNA using the four ribonucleoside triphosphates as substrates. This chain is DNA-directed RNA polymerase subunit alpha, found in Bifidobacterium longum (strain NCC 2705).